Here is a 146-residue protein sequence, read N- to C-terminus: Cystatin-C (146 aa).

An N-terminal signal peptide occupies residues 1 to 26 (MAGPLRAPLLLLAILAVALAVSPAAG). Ser-43 is modified (phosphoserine). The short motif at 81–85 (QIVAG) is the Secondary area of contact element. 2 disulfides stabilise this stretch: Cys-99–Cys-109 and Cys-123–Cys-143.

The protein belongs to the cystatin family.

The protein resides in the secreted. As an inhibitor of cysteine proteinases, this protein is thought to serve an important physiological role as a local regulator of this enzyme activity. This is Cystatin-C (CST3) from Macaca mulatta (Rhesus macaque).